The primary structure comprises 209 residues: Lysine-rich arabinogalactan protein 18 (209 aa).

Positions 1 to 21 are cleaved as a signal peptide; that stretch reads MDRNFLLTVTLICIVVAGVGG. The interval 21–185 is disordered; that stretch reads GQSPISSPTK…PSADDQSGAA (165 aa). Over residues 23–79 the composition is skewed to low complexity; the sequence is SPISSPTKSPTTPSAPTTSPTKSPAVTSPTTAPAKTPTASASSPVESPKSPAPVSES. Pro residues-rich tracts occupy residues 80 to 95 and 103 to 119; these read SPPPTPVPESSPPVPA and SSPPVPAPVADSPPAPV. A compositionally biased stretch (basic residues) spans 132-145; the sequence is SKHKKTTKKSKKHQ. A compositionally biased stretch (pro residues) spans 149-164; that stretch reads APAPELLGPPAPPTES. Gly-183 carries GPI-anchor amidated glycine lipidation. The propeptide at 184-209 is removed in mature form; that stretch reads AASTRVLRNVAVGAVATAWAVLVMAF.

This sequence belongs to the lysine-rich AGP family. Post-translationally, O-glycosylated on the hydroxyproline residues. In terms of tissue distribution, predominantly expressed in flowers, and moderately expressed in roots, stems and young leaves.

The protein localises to the cell membrane. Functionally, proteoglycan that seems to be implicated in diverse developmental roles such as differentiation, cell-cell recognition, embryogenesis and programmed cell death. The protein is Lysine-rich arabinogalactan protein 18 (AGP18) of Arabidopsis thaliana (Mouse-ear cress).